The sequence spans 268 residues: Microtubule-associated protein RP/EB family member 1 (268 aa).

Alanine 2 carries the post-translational modification N-acetylalanine. Positions 14–116 (NLSRHDMLAW…FVQWFKKFFD (103 aa)) constitute a Calponin-homology (CH) domain. Lysine 66 carries the N6-crotonyllysine modification. Position 124 is a phosphotyrosine (tyrosine 124). An interaction with MTUS2/TIP150 region spans residues 124 to 268 (YDPVAARQGQ…GGPQEEQEEY (145 aa)). The tract at residues 146-180 (LSKPKKPLGSSTAAPQRPIATQRTTAAPKAGPGMV) is disordered. A compositionally biased stretch (polar residues) spans 154 to 170 (GSSTAAPQRPIATQRTT). Serine 155 carries the phosphoserine modification. The region spanning 185–255 (GVGNGDDEAA…LYATDEGFVI (71 aa)) is the EB1 C-terminal domain. An interaction with APC region spans residues 206–211 (TVEDLE). Positions 208 to 268 (EDLEKERDFY…GGPQEEQEEY (61 aa)) are DCTN1-binding. Position 220 is an N6-acetyllysine (lysine 220). The tract at residues 220 to 242 (KLRNIELICQENEGENDPVLQRI) is APC-binding. The tract at residues 232–255 (EGENDPVLQRIVDILYATDEGFVI) is interaction with SKA1.

Belongs to the MAPRE family. As to quaternary structure, homodimer. Heterodimer with MAPRE3. Interacts (via C-terminal residues 206-211) with APC (via C-terminal residues 2674-2845); the interaction inhibits association with and bundling of F-actin. Interacts with DCTN1, DIAPH1 and DIAPH2. Interacts with DCTN2, TERF1 and dynein intermediate chain. Interacts with CLASP2, DST, KIF2C and STIM1; probably required for their targeting to the growing microtubule plus ends. Interacts with MTUS2; interaction is direct and probably targets MTUS2 to microtubules. Interacts (via C-terminus) with SKA1 (via SXIP motif); the interaction is direct and stabilizes the kinetochore-microtubule attachment of the SKA1 complex. Interacts with APC2. Interacts with CLASP1. Interacts (via C-terminus) with CLIP1. Interacts with SLAIN2 and SLAIN1. Interacts with MACF1. Interacts with KIF18B; this interaction is required for efficient accumulation of KIF18B at microtubule plus ends. Interacts with MISP. Interacts with RABL2/RABL2A; binds preferentially to GTP-bound RABL2. Interacts with KCNAB2. Interacts with KNSTRN. Interacts with NCKAP5L. Interacts with AKAP9. Interacts with PDE4DIP isoform 2/MMG8/SMYLE; this interaction is required for its recruitment to the Golgi apparatus. May form a pericentrosomal complex with AKAP9, CDK5RAP2 and PDE4DIP isoform 2/MMG8/SMYLE; within this complex, MAPRE1 binding to CDK5RAP2 may be mediated by PDE4DIP. Contrary to other mammalian species, does not interact with CDK5RAP2, possibly due to the lack of conservation of the MAPRE1-binding motif in mouse CDK5RAP2. Interacts with AKNA. Interacts with GAS2L1, GAS2L2, and GAS2L3. Interacts with RARRES1 and AGBL2. Post-translationally, acetylation at Lys-220 by KAT2B/PCAF promotes dynamic kinetochore-microtubule interactions in early mitosis. Crotonylated by KAT5 during mitosis, promoting astral microtubule plasticity and dynamic connection between astral microtubules and the cortex during mitotic chromosome segregation, thereby ensuring accurate spindle positioning in mitosis. Decrotonylated by HDAC3. As to expression, expressed within the midpiece of sperm tail (at protein level).

The protein localises to the cytoplasm. Its subcellular location is the cytoskeleton. It localises to the microtubule organizing center. The protein resides in the centrosome. It is found in the spindle. The protein localises to the spindle pole. Plus-end tracking protein (+TIP) that binds to the plus-end of microtubules and regulates the dynamics of the microtubule cytoskeleton. Recruits other +TIP proteins to microtubules by binding to a conserved Ser-X-Leu-Pro (SXLP) motif in their polypeptide chains. Promotes cytoplasmic microtubule nucleation and elongation. Involved in mitotic spindle positioning by stabilizing microtubules and promoting dynamic connection between astral microtubules and the cortex during mitotic chromosome segregation. Assists chromosome alignment in metaphase by recruiting the SKA complex to the spindle and stabilizing its interactions with microtubule bundles (K-fibers). Also acts as a regulator of minus-end microtubule organization: interacts with the complex formed by AKAP9 and PDE4DIP, leading to recruit CAMSAP2 to the Golgi apparatus, thereby tethering non-centrosomal minus-end microtubules to the Golgi, an important step for polarized cell movement. Promotes elongation of CAMSAP2-decorated microtubule stretches on the minus-end of microtubules. Acts as a regulator of autophagosome transport via interaction with CAMSAP2. Functions downstream of Rho GTPases and DIAPH1 in stable microtubule formation. May play a role in cell migration. This Mus musculus (Mouse) protein is Microtubule-associated protein RP/EB family member 1 (Mapre1).